The following is a 90-amino-acid chain: Conotoxin Vc22.1 (90 aa).

A signal peptide spans 1 to 18 (MMTRVFLAMFFLLVLTKG).

The protein belongs to the E superfamily. Post-translationally, contains 4 disulfide bonds. Expressed by the venom duct.

It is found in the secreted. The sequence is that of Conotoxin Vc22.1 from Conus victoriae (Queen Victoria cone).